The following is a 118-amino-acid chain: MRQNNLIAKINQEQLRDDVPEFRAGDTVRVHARIVEGSRERIQLFEGVVIKRKGAGIQATYTVRKISNGVGVERIFPLHSPRVAKIDVIRQGRVRRAKLYYLRELNGKAARIPERRRN.

The protein belongs to the bacterial ribosomal protein bL19 family.

This protein is located at the 30S-50S ribosomal subunit interface and may play a role in the structure and function of the aminoacyl-tRNA binding site. This chain is Large ribosomal subunit protein bL19, found in Levilactobacillus brevis (strain ATCC 367 / BCRC 12310 / CIP 105137 / JCM 1170 / LMG 11437 / NCIMB 947 / NCTC 947) (Lactobacillus brevis).